The sequence spans 752 residues: Photosystem I P700 chlorophyll a apoprotein A1 (752 aa).

8 helical membrane-spanning segments follow: residues 73–96 (IFSAHFGHLAVVFIWLSGAYFHGA), 159–182 (LYVTAIGALVMAALMLFAGWFHYH), 198–222 (MNHHLAGLFGLGSLSWAGHQIHVSL), 294–312 (RAHHHLAIAVLFIVAGHMY), 349–372 (WHAQLSLNLALFGSLSIIVAHHMY), 388–414 (LCLFTHHVWIGGFLIVGAGAHAAIFMV), 436–458 (AIISHLNWVCIFLGFHSFGLYIH), and 533–551 (FLVHHIHAFTIHVTVLILL). Residues C575 and C584 each coordinate [4Fe-4S] cluster. 2 consecutive transmembrane segments (helical) span residues 591–612 (HVFLGLFWMYNSLSVVLFHFSW) and 666–688 (LSAYGLMFLGAHFIWAFSLMFLF). H677 is a binding site for chlorophyll a'. Chlorophyll a-binding residues include M685 and Y693. W694 contributes to the phylloquinone binding site. The helical transmembrane segment at 726 to 746 (AVGVAHYLLGGIATTWSFFHA) threads the bilayer.

This sequence belongs to the PsaA/PsaB family. The PsaA/B heterodimer binds the P700 chlorophyll special pair and subsequent electron acceptors. PSI consists of a core antenna complex that captures photons, and an electron transfer chain that converts photonic excitation into a charge separation. The eukaryotic PSI reaction center is composed of at least 11 subunits. P700 is a chlorophyll a/chlorophyll a' dimer, A0 is one or more chlorophyll a, A1 is one or both phylloquinones and FX is a shared 4Fe-4S iron-sulfur center. is required as a cofactor.

Its subcellular location is the plastid. The protein resides in the cyanelle thylakoid membrane. It carries out the reaction reduced [plastocyanin] + hnu + oxidized [2Fe-2S]-[ferredoxin] = oxidized [plastocyanin] + reduced [2Fe-2S]-[ferredoxin]. Its function is as follows. PsaA and PsaB bind P700, the primary electron donor of photosystem I (PSI), as well as the electron acceptors A0, A1 and FX. PSI is a cytochrome c6-ferredoxin oxidoreductase, converting photonic excitation into a charge separation, which transfers an electron from the donor P700 chlorophyll pair to the spectroscopically characterized acceptors A0, A1, FX, FA and FB in turn. Oxidized P700 is reduced on the lumenal side of the thylakoid membrane by cytochrome c6. The protein is Photosystem I P700 chlorophyll a apoprotein A1 of Cyanophora paradoxa.